We begin with the raw amino-acid sequence, 505 residues long: T-cell activation GTPase-activating protein 1 (505 aa).

5 disordered regions span residues 81–147, 160–212, 242–293, 311–339, and 414–441; these read DDSL…SESS, QQDR…DPFT, QGHI…QREI, RTSS…SQLS, and KPST…HRLS. Residues 90 to 102 show a composition bias toward polar residues; that stretch reads SDVSTLQNDSAYD. Over residues 203–212 the composition is skewed to acidic residues; that stretch reads EGDEAEDPFT. Over residues 250 to 262 the composition is skewed to low complexity; the sequence is SRSSPGESLGSSP. 2 stretches are compositionally biased toward basic and acidic residues: residues 283–292 and 318–336; these read KTDKTKPQRE and EKSK…RKES.

The chain is T-cell activation GTPase-activating protein 1 (Tagap1) from Mus musculus (Mouse).